The primary structure comprises 143 residues: MIVQVINGPNLGRLGRREPDVYGDTTHDQLAALIEAEAAALGLKAIVRQSDSEAELLDWIHGAADANQPVILNAGGLTHTSVALRDACAELSAPLIEVHISNVHAREEFRRHSYLSPVATGAIVGLGVQGYLLALRYLAGRPA.

Tyr22 acts as the Proton acceptor in catalysis. Residues Asn73, His79, and Asp86 each coordinate substrate. His99 functions as the Proton donor in the catalytic mechanism. Residues 100–101 (IS) and Arg110 each bind substrate.

This sequence belongs to the type-II 3-dehydroquinase family. In terms of assembly, homododecamer.

The enzyme catalyses 3-dehydroquinate = 3-dehydroshikimate + H2O. The protein operates within metabolic intermediate biosynthesis; chorismate biosynthesis; chorismate from D-erythrose 4-phosphate and phosphoenolpyruvate: step 3/7. In terms of biological role, catalyzes a trans-dehydration via an enolate intermediate. The protein is 3-dehydroquinate dehydratase of Mycolicibacterium paratuberculosis (strain ATCC BAA-968 / K-10) (Mycobacterium paratuberculosis).